Reading from the N-terminus, the 786-residue chain is Endonuclease MutS2 (786 aa).

335-342 (GPNTGGKT) is an ATP binding site. Positions 711-786 (LDLRGERFEN…GLGVTVVELK (76 aa)) constitute a Smr domain.

Belongs to the DNA mismatch repair MutS family. MutS2 subfamily. Homodimer. Binds to stalled ribosomes, contacting rRNA.

Endonuclease that is involved in the suppression of homologous recombination and thus may have a key role in the control of bacterial genetic diversity. Functionally, acts as a ribosome collision sensor, splitting the ribosome into its 2 subunits. Detects stalled/collided 70S ribosomes which it binds and splits by an ATP-hydrolysis driven conformational change. Acts upstream of the ribosome quality control system (RQC), a ribosome-associated complex that mediates the extraction of incompletely synthesized nascent chains from stalled ribosomes and their subsequent degradation. Probably generates substrates for RQC. The protein is Endonuclease MutS2 of Bacillus cereus (strain Q1).